The sequence spans 59 residues: UPF0339 protein CC_2965 (59 aa).

Belongs to the UPF0339 family.

The protein is UPF0339 protein CC_2965 of Caulobacter vibrioides (strain ATCC 19089 / CIP 103742 / CB 15) (Caulobacter crescentus).